Here is an 82-residue protein sequence, read N- to C-terminus: Cytochrome b559 subunit alpha (82 aa).

The helical transmembrane segment at 21-35 (VIHSVTIPSLFIAGW) threads the bilayer. Heme is bound at residue H23.

The protein belongs to the PsbE/PsbF family. As to quaternary structure, heterodimer of an alpha subunit and a beta subunit. PSII is composed of 1 copy each of membrane proteins PsbA, PsbB, PsbC, PsbD, PsbE, PsbF, PsbH, PsbI, PsbJ, PsbK, PsbL, PsbM, PsbT, PsbX, PsbY, PsbZ, Psb30/Ycf12, at least 3 peripheral proteins of the oxygen-evolving complex and a large number of cofactors. It forms dimeric complexes. The cofactor is heme b.

It localises to the plastid. It is found in the chloroplast thylakoid membrane. In terms of biological role, this b-type cytochrome is tightly associated with the reaction center of photosystem II (PSII). PSII is a light-driven water:plastoquinone oxidoreductase that uses light energy to abstract electrons from H(2)O, generating O(2) and a proton gradient subsequently used for ATP formation. It consists of a core antenna complex that captures photons, and an electron transfer chain that converts photonic excitation into a charge separation. This Ostreococcus tauri protein is Cytochrome b559 subunit alpha.